We begin with the raw amino-acid sequence, 462 residues long: GTPase Der (462 aa).

EngA-type G domains follow at residues 3–166 (PVIA…TTET) and 175–348 (IKIA…HSAI). GTP is bound by residues 9-16 (GRPNVGKS), 56-60 (DTGGI), 118-121 (NKTD), 181-188 (GRPNVGKS), 228-232 (DTAGV), and 293-296 (NKWD). A KH-like domain is found at 349–433 (QSFSTPKLTR…PLKIEFKGGQ (85 aa)).

The protein belongs to the TRAFAC class TrmE-Era-EngA-EngB-Septin-like GTPase superfamily. EngA (Der) GTPase family. As to quaternary structure, associates with the 50S ribosomal subunit.

Functionally, GTPase that plays an essential role in the late steps of ribosome biogenesis. This is GTPase Der from Legionella pneumophila (strain Paris).